Here is a 484-residue protein sequence, read N- to C-terminus: MTSLFFFVLLFSSLLISNGDANPNYKEALSKSLLFFQGQRSGPLPRGQQISWRASSGLSDGSAAHVDLTGGYYDAGDNVKFNLPMAFTTTMLSWSALEYGKRMGPELENARVNIRWATDYLLKCARATPGKLYVGVGDPNVDHKCWERPEDMDTPRTVYSVSASNPGSDVAAETAAALAAASMVFRKVDSKYSRLLLATAKDVMQFAIQYQGAYSDSLSSSVCPFYCSYSGYKDELMWGASWLLRATNNPYYANFIKSLGGGDQPDIFSWDNKYAGAYVLLSRRALLNKDSNFEQYKQAAENFICKILPDSPSSSTQYTQGGLMYKLPQSNLQYVTSITFLLTTYAKYMKATKHTFNCGSSVIVPNALISLSKRQVDYILGDNPIKMSYMVGFSSNFPKRIHHRASSLPSHALRSQSLGCNGGFQSFYTQNPNPNILTGAIVGGPNQNDGYPDQRDDYSHAEPATYINAAFVGPLAYFAAGRST.

A signal peptide spans Met1 to Ala21. Asp77 acts as the Nucleophile in catalysis. Active-site residues include His402, Asp453, and Glu462.

The protein belongs to the glycosyl hydrolase 9 (cellulase E) family. Specifically expressed in root cap cells.

Its subcellular location is the secreted. The protein localises to the cell wall. It catalyses the reaction Endohydrolysis of (1-&gt;4)-beta-D-glucosidic linkages in cellulose, lichenin and cereal beta-D-glucans.. The sequence is that of Endoglucanase 9 (CEL3) from Arabidopsis thaliana (Mouse-ear cress).